The chain runs to 301 residues: Cilia- and flagella-associated protein 161 (301 aa).

The disordered stretch occupies residues 269–301 (GNPRDASSSMLDLPKPPTEDTRAMEQAMGLDTQ).

In terms of assembly, microtubule inner protein component of sperm flagellar doublet microtubules. As to expression, expressed in airway epithelial cells.

It localises to the cytoplasm. The protein resides in the cytoskeleton. It is found in the cilium axoneme. Its subcellular location is the flagellum axoneme. Microtubule inner protein (MIP) part of the dynein-decorated doublet microtubules (DMTs) in cilia axoneme, which is required for motile cilia beating. The chain is Cilia- and flagella-associated protein 161 from Homo sapiens (Human).